The chain runs to 349 residues: Meiotic recombination protein DMC1 homolog (349 aa).

138-145 (GEFRSGKT) is an ATP binding site. DsDNA is bound at residue arginine 240. SsDNA contacts are provided by arginine 240, phenylalanine 243, arginine 246, arginine 252, and arginine 320. 2 residues coordinate dsDNA: arginine 246 and arginine 252.

Belongs to the RecA family. DMC1 subfamily. As to quaternary structure, double stacked ring-shaped homooctamer.

It is found in the nucleus. In terms of biological role, may participate in meiotic recombination. The chain is Meiotic recombination protein DMC1 homolog (LIM15) from Lilium longiflorum (Trumpet lily).